Here is a 169-residue protein sequence, read N- to C-terminus: Der GTPase-activating protein YihI (169 aa).

Disordered regions lie at residues 1–100 and 144–169; these read MKPS…AELE and GLSYDDDEEEEEDEKQEDMMRLLRGN. The span at 10–19 shows a compositional bias: basic residues; sequence SKGHAKARRK. Over residues 20 to 30 the composition is skewed to basic and acidic residues; the sequence is TREELDQEARD. Positions 31 to 40 are enriched in basic residues; the sequence is RKRQKKRRGH. The span at 49-58 shows a compositional bias: polar residues; it reads GNTTSGSKGQ. A compositionally biased stretch (acidic residues) spans 147 to 159; the sequence is YDDDEEEEEDEKQ. The segment covering 160-169 has biased composition (basic and acidic residues); that stretch reads EDMMRLLRGN.

Belongs to the YihI family. In terms of assembly, interacts with Der.

A GTPase-activating protein (GAP) that modifies Der/EngA GTPase function. May play a role in ribosome biogenesis. This is Der GTPase-activating protein YihI from Escherichia coli O6:H1 (strain CFT073 / ATCC 700928 / UPEC).